Reading from the N-terminus, the 603-residue chain is Elongation factor 4 (603 aa).

In terms of domain architecture, tr-type G spans 7-191 (DNIRNFSIVA…AIVTRLPPPK (185 aa)). GTP is bound by residues 19–24 (DHGKST) and 138–141 (NKVD).

The protein belongs to the TRAFAC class translation factor GTPase superfamily. Classic translation factor GTPase family. LepA subfamily.

It is found in the cell inner membrane. The enzyme catalyses GTP + H2O = GDP + phosphate + H(+). Its function is as follows. Required for accurate and efficient protein synthesis under certain stress conditions. May act as a fidelity factor of the translation reaction, by catalyzing a one-codon backward translocation of tRNAs on improperly translocated ribosomes. Back-translocation proceeds from a post-translocation (POST) complex to a pre-translocation (PRE) complex, thus giving elongation factor G a second chance to translocate the tRNAs correctly. Binds to ribosomes in a GTP-dependent manner. This is Elongation factor 4 from Rhodopseudomonas palustris (strain ATCC BAA-98 / CGA009).